A 158-amino-acid chain; its full sequence is 2-C-methyl-D-erythritol 2,4-cyclodiphosphate synthase (158 aa).

The a divalent metal cation site is built by Asp8 and His10. Residues 8 to 10 (DVH) and 34 to 35 (HS) each bind 4-CDP-2-C-methyl-D-erythritol 2-phosphate. His42 contacts a divalent metal cation. Residues 56-58 (DIG), 132-135 (TTNE), and Arg142 each bind 4-CDP-2-C-methyl-D-erythritol 2-phosphate.

It belongs to the IspF family. Homotrimer. Requires a divalent metal cation as cofactor.

The enzyme catalyses 4-CDP-2-C-methyl-D-erythritol 2-phosphate = 2-C-methyl-D-erythritol 2,4-cyclic diphosphate + CMP. The protein operates within isoprenoid biosynthesis; isopentenyl diphosphate biosynthesis via DXP pathway; isopentenyl diphosphate from 1-deoxy-D-xylulose 5-phosphate: step 4/6. Involved in the biosynthesis of isopentenyl diphosphate (IPP) and dimethylallyl diphosphate (DMAPP), two major building blocks of isoprenoid compounds. Catalyzes the conversion of 4-diphosphocytidyl-2-C-methyl-D-erythritol 2-phosphate (CDP-ME2P) to 2-C-methyl-D-erythritol 2,4-cyclodiphosphate (ME-CPP) with a corresponding release of cytidine 5-monophosphate (CMP). This chain is 2-C-methyl-D-erythritol 2,4-cyclodiphosphate synthase, found in Chlorobium phaeobacteroides (strain DSM 266 / SMG 266 / 2430).